Reading from the N-terminus, the 78-residue chain is MAFRENVLEILEEITETDEVVQNTNIKLFDEGLLDSMATVQLLIEIEEKLDITVPVSEFDRDEWATPEMIITQLEALK.

In terms of domain architecture, Carrier spans 1 to 78 (MAFRENVLEI…MIITQLEALK (78 aa)). Residue S36 is modified to O-(pantetheine 4'-phosphoryl)serine.

This sequence belongs to the DltC family. In terms of processing, 4'-phosphopantetheine is transferred from CoA to a specific serine of apo-DCP.

The protein resides in the cytoplasm. The protein operates within cell wall biogenesis; lipoteichoic acid biosynthesis. Carrier protein involved in the D-alanylation of lipoteichoic acid (LTA). The loading of thioester-linked D-alanine onto DltC is catalyzed by D-alanine--D-alanyl carrier protein ligase DltA. The DltC-carried D-alanyl group is further transferred to cell membrane phosphatidylglycerol (PG) by forming an ester bond, probably catalyzed by DltD. D-alanylation of LTA plays an important role in modulating the properties of the cell wall in Gram-positive bacteria, influencing the net charge of the cell wall. The chain is D-alanyl carrier protein from Listeria monocytogenes serotype 4b (strain CLIP80459).